The following is a 695-amino-acid chain: DNA ligase (695 aa).

NAD(+)-binding positions include 39–43 (DAEYD), 88–89 (SL), and Glu-124. The active-site N6-AMP-lysine intermediate is Lys-126. NAD(+) contacts are provided by Arg-147, Glu-183, Lys-299, and Lys-323. Residues Cys-419, Cys-422, Cys-437, and Cys-443 each contribute to the Zn(2+) site. The 84-residue stretch at 612–695 (PAQGHLSGKT…ELAGIGPVGP (84 aa)) folds into the BRCT domain.

This sequence belongs to the NAD-dependent DNA ligase family. LigA subfamily. Mg(2+) serves as cofactor. The cofactor is Mn(2+).

The enzyme catalyses NAD(+) + (deoxyribonucleotide)n-3'-hydroxyl + 5'-phospho-(deoxyribonucleotide)m = (deoxyribonucleotide)n+m + AMP + beta-nicotinamide D-nucleotide.. Its function is as follows. DNA ligase that catalyzes the formation of phosphodiester linkages between 5'-phosphoryl and 3'-hydroxyl groups in double-stranded DNA using NAD as a coenzyme and as the energy source for the reaction. It is essential for DNA replication and repair of damaged DNA. This is DNA ligase from Gluconacetobacter diazotrophicus (strain ATCC 49037 / DSM 5601 / CCUG 37298 / CIP 103539 / LMG 7603 / PAl5).